Here is a 608-residue protein sequence, read N- to C-terminus: Chaperone protein DnaK (608 aa).

Thr-175 bears the Phosphothreonine; by autocatalysis mark.

It belongs to the heat shock protein 70 family.

In terms of biological role, acts as a chaperone. The chain is Chaperone protein DnaK from Finegoldia magna (strain ATCC 29328 / DSM 20472 / WAL 2508) (Peptostreptococcus magnus).